The chain runs to 141 residues: Transcriptional regulator MraZ (141 aa).

SpoVT-AbrB domains lie at 5 to 47 and 76 to 119; these read EFEH…PAER and AAEC…GAEH.

The protein belongs to the MraZ family. In terms of assembly, forms oligomers.

The protein resides in the cytoplasm. The protein localises to the nucleoid. In Lactiplantibacillus plantarum (strain ATCC BAA-793 / NCIMB 8826 / WCFS1) (Lactobacillus plantarum), this protein is Transcriptional regulator MraZ.